Consider the following 513-residue polypeptide: Maturase K (513 aa).

The protein belongs to the intron maturase 2 family. MatK subfamily.

It localises to the plastid. The protein resides in the chloroplast. Functionally, usually encoded in the trnK tRNA gene intron. Probably assists in splicing its own and other chloroplast group II introns. The protein is Maturase K of Panicum capillare (Witchgrass).